Here is a 328-residue protein sequence, read N- to C-terminus: Tetraacyldisaccharide 4'-kinase (328 aa).

ATP is bound at residue 55–62 (TAGGNGKT).

Belongs to the LpxK family.

The catalysed reaction is a lipid A disaccharide + ATP = a lipid IVA + ADP + H(+). It functions in the pathway glycolipid biosynthesis; lipid IV(A) biosynthesis; lipid IV(A) from (3R)-3-hydroxytetradecanoyl-[acyl-carrier-protein] and UDP-N-acetyl-alpha-D-glucosamine: step 6/6. Transfers the gamma-phosphate of ATP to the 4'-position of a tetraacyldisaccharide 1-phosphate intermediate (termed DS-1-P) to form tetraacyldisaccharide 1,4'-bis-phosphate (lipid IVA). The polypeptide is Tetraacyldisaccharide 4'-kinase (Escherichia coli (strain 55989 / EAEC)).